Reading from the N-terminus, the 267-residue chain is Inositol-1-monophosphatase (267 aa).

Residues E66, D84, L86, and D87 each coordinate Mg(2+). Substrate is bound at residue E66. Substrate contacts are provided by residues 86-89 (LDGS), R182, and D213. D213 serves as a coordination point for Mg(2+).

It belongs to the inositol monophosphatase superfamily. The cofactor is Mg(2+).

It catalyses the reaction a myo-inositol phosphate + H2O = myo-inositol + phosphate. The sequence is that of Inositol-1-monophosphatase (suhB) from Aeropyrum pernix (strain ATCC 700893 / DSM 11879 / JCM 9820 / NBRC 100138 / K1).